We begin with the raw amino-acid sequence, 148 residues long: uncharacterized protein (148 aa).

The HTH asnC-type domain occupies 4–65 (LDRVDMQLVK…IPDIDKLGYM (62 aa)). The H-T-H motif DNA-binding region spans 23–42 (YRELADILNTTRQRIARRID).

This is an uncharacterized protein from Pyrococcus horikoshii (strain ATCC 700860 / DSM 12428 / JCM 9974 / NBRC 100139 / OT-3).